We begin with the raw amino-acid sequence, 225 residues long: Claudin-17 (225 aa).

Residues 1-7 are Cytoplasmic-facing; the sequence is MAFYPLQ. A helical membrane pass occupies residues 8-28; the sequence is IAGLVLGFLGMVGTLATTLLP. At 29–81 the chain is on the extracellular side; sequence QWRVSAFIGSNIIVFERIWEGLWMNCVRQAKARLQCKFYSSMLALSPALEAAR. The helical transmembrane segment at 82 to 102 threads the bilayer; the sequence is ALMCVAVALSLIALIIGICGM. The Cytoplasmic segment spans residues 103–124; sequence KKIQCTGSNERAKAYLLGTSGV. Residues 125-145 traverse the membrane as a helical segment; it reads LFILTGIFVLIPVCWTANIII. Topologically, residues 146-164 are extracellular; sequence RDFYNPAVHVGQKRELGAA. A helical transmembrane segment spans residues 165 to 185; it reads LFLGWASVAVLFIAGGLLCGF. Over 186-225 the chain is Cytoplasmic; that stretch reads CCCNRKKQRDGYPAPRPSMPRTDERRRNMTRQSETPTSYV. The disordered stretch occupies residues 194-225; that stretch reads RDGYPAPRPSMPRTDERRRNMTRQSETPTSYV. Positions 215-225 are enriched in polar residues; that stretch reads TRQSETPTSYV.

It belongs to the claudin family. Does not form homotypic polymeric strands and it is not sufficient to form tight junctions by its own. Interacts with OCLN.

It localises to the cell junction. Its subcellular location is the tight junction. The protein resides in the cell membrane. It carries out the reaction chloride(in) = chloride(out). The catalysed reaction is hydrogencarbonate(in) = hydrogencarbonate(out). It catalyses the reaction bromide(in) = bromide(out). The enzyme catalyses iodide(out) = iodide(in). It carries out the reaction fluoride(in) = fluoride(out). The catalysed reaction is nitrate(in) = nitrate(out). It catalyses the reaction thiocyanate(in) = thiocyanate(out). Functionally, channel-forming tight junction protein with selectivity for anions, including chloride and hydrogencarbonate, and for solutes smaller than 9 Angstrom in diameter. In the kidney proximal tubule, may be involved in quantitative reabsorption of filtered anions. Does not affect water permeability. The protein is Claudin-17 (CLDN17) of Sus scrofa (Pig).